The sequence spans 2698 residues: Zinc finger protein 292 (2698 aa).

Residues 567 to 589 (YSCPICAKNFNSKDSFVPHVTLH) form a C2H2-type 1 zinc finger. Residue Ser654 is modified to Phosphoserine. 6 C2H2-type zinc fingers span residues 681 to 705 (FNCP…VKGH), 722 to 744 (VICQ…LQMH), 750 to 774 (YICI…RKEH), 779 to 803 (AKCL…EAQH), 807 to 831 (YTCK…QDGH), and 1085 to 1110 (FSCQ…KTAH). Residues 822 to 834 (SEMEKHQDGHSHP) show a composition bias toward basic and acidic residues. The segment at 822–894 (SEMEKHQDGH…AEPAVTKHGQ (73 aa)) is disordered. Residue Lys1104 is modified to N6-acetyllysine. A Phosphoserine modification is found at Ser1146. A compositionally biased stretch (polar residues) spans 1278–1325 (NSTNHYPSQTDGNINSSFLKGGSSENGVFPSQVSSADDFSSTSAQPST). The tract at residues 1278–1349 (NSTNHYPSQT…KERKPKHNKR (72 aa)) is disordered. The C2H2-type 8; degenerate zinc-finger motif lies at 1361-1383 (FICSRCYRAFTNPRSLGGHLSKR). Composition is skewed to polar residues over residues 1574–1603 (FSSS…TRSS) and 1624–1633 (SVSNTSQNVL). Residues 1574–1656 (FSSSTEPPQN…PVPDTNTRSD (83 aa)) form a disordered region. C2H2-type zinc fingers lie at residues 1879–1904 (FVCQ…GKIH) and 1924–1949 (FKCV…QLVH). The disordered stretch occupies residues 1964 to 1997 (PYGRKSQSENLSSPQNNQVKKQPSMAEETKTESQ). The segment covering 1971–1984 (SENLSSPQNNQVKK) has biased composition (polar residues). Lys2020 carries the post-translational modification N6-acetyllysine. A compositionally biased stretch (basic and acidic residues) spans 2021 to 2032 (QLAEKKSPEKPE). The tract at residues 2021–2075 (QLAEKKSPEKPESSSQPVTSSAEQYNANLANLKTKGRKNKRHRKEKEEKREKNPV) is disordered. The segment covering 2038–2051 (VTSSAEQYNANLAN) has biased composition (polar residues). The segment covering 2054 to 2064 (TKGRKNKRHRK) has biased composition (basic residues). 4 consecutive C2H2-type zinc fingers follow at residues 2091-2116 (YCCV…QAVH), 2149-2174 (FRCQ…MKLH), 2193-2218 (FPCD…EVDH), and 2233-2258 (YKCD…FNKH). Over residues 2262-2271 (HKAHLIRPRK) the composition is skewed to basic residues. The tract at residues 2262 to 2323 (HKAHLIRPRK…KSNLENKSAK (62 aa)) is disordered. The segment at 2362-2386 (YPCMIKGCTSVVTSESNIIRHYKCH) adopts a C2H2-type 15 zinc-finger fold. Disordered regions lie at residues 2411-2454 (GKEI…GEKD), 2467-2553 (LINE…EEHP), and 2580-2608 (KQKK…HVDK). Over residues 2421 to 2437 (KNDKKDPDSSVLEKNDN) the composition is skewed to basic and acidic residues. The span at 2470–2488 (EDSTNAENQGNTTLKGNNE) shows a compositional bias: polar residues. Basic and acidic residues-rich tracts occupy residues 2489 to 2501 (FQEH…ERQK) and 2580 to 2590 (KQKKNSDRDHS). The segment covering 2596–2606 (RGSHSSSRRHV) has biased composition (basic residues).

Belongs to the krueppel C2H2-type zinc-finger protein family. In terms of tissue distribution, expressed in postnatal day 1 (P1) pituitary. Also detected in presomatotrophic cell line GHFT1-5.

Its subcellular location is the nucleus. In terms of biological role, may be involved in transcriptional regulation. The chain is Zinc finger protein 292 from Mus musculus (Mouse).